The chain runs to 185 residues: AP-3 complex subunit sigma (185 aa).

It belongs to the adaptor complexes small subunit family. In terms of assembly, adaptor protein complex 3 (AP-3) is a heterotetramer composed of 2 large adaptins (APL5 and APL6), a medium adaptin (APM3) and a small adaptin (APS3).

It is found in the golgi apparatus. The protein localises to the cytoplasmic vesicle membrane. Part of the AP-3 complex, an adaptor-related complex which is not clathrin-associated. The complex is associated with the Golgi region as well as more peripheral structures. It facilitates the budding of vesicles from the Golgi membrane and may be directly involved in trafficking to the vacuole. This chain is AP-3 complex subunit sigma (APS3), found in Eremothecium gossypii (strain ATCC 10895 / CBS 109.51 / FGSC 9923 / NRRL Y-1056) (Yeast).